The chain runs to 217 residues: Probable GTP-binding protein EngB (217 aa).

The EngB-type G domain maps to 29-213; the sequence is GPLEVAFAGR…RQAIAETVGI (185 aa). GTP contacts are provided by residues 37–44, 64–68, 91–94, 158–161, and 192–194; these read GRSNVGKS, GRTQE, DMPG, TKTD, and TSS. Serine 44 and threonine 66 together coordinate Mg(2+).

It belongs to the TRAFAC class TrmE-Era-EngA-EngB-Septin-like GTPase superfamily. EngB GTPase family. Mg(2+) serves as cofactor.

In terms of biological role, necessary for normal cell division and for the maintenance of normal septation. This is Probable GTP-binding protein EngB from Rhizobium johnstonii (strain DSM 114642 / LMG 32736 / 3841) (Rhizobium leguminosarum bv. viciae).